Reading from the N-terminus, the 190-residue chain is Potassium-transporting ATPase KdpC subunit (190 aa).

The helical transmembrane segment at 10-30 (TFLFLLLITGGVYPLLTTALG) threads the bilayer.

It belongs to the KdpC family. The system is composed of three essential subunits: KdpA, KdpB and KdpC.

The protein resides in the cell inner membrane. Part of the high-affinity ATP-driven potassium transport (or Kdp) system, which catalyzes the hydrolysis of ATP coupled with the electrogenic transport of potassium into the cytoplasm. This subunit acts as a catalytic chaperone that increases the ATP-binding affinity of the ATP-hydrolyzing subunit KdpB by the formation of a transient KdpB/KdpC/ATP ternary complex. The protein is Potassium-transporting ATPase KdpC subunit of Escherichia coli O81 (strain ED1a).